A 154-amino-acid polypeptide reads, in one-letter code: SsrA-binding protein (154 aa).

It belongs to the SmpB family.

Its subcellular location is the cytoplasm. In terms of biological role, required for rescue of stalled ribosomes mediated by trans-translation. Binds to transfer-messenger RNA (tmRNA), required for stable association of tmRNA with ribosomes. tmRNA and SmpB together mimic tRNA shape, replacing the anticodon stem-loop with SmpB. tmRNA is encoded by the ssrA gene; the 2 termini fold to resemble tRNA(Ala) and it encodes a 'tag peptide', a short internal open reading frame. During trans-translation Ala-aminoacylated tmRNA acts like a tRNA, entering the A-site of stalled ribosomes, displacing the stalled mRNA. The ribosome then switches to translate the ORF on the tmRNA; the nascent peptide is terminated with the 'tag peptide' encoded by the tmRNA and targeted for degradation. The ribosome is freed to recommence translation, which seems to be the essential function of trans-translation. In Synechocystis sp. (strain ATCC 27184 / PCC 6803 / Kazusa), this protein is SsrA-binding protein.